Here is a 26-residue protein sequence, read N- to C-terminus: Acyl carrier protein (26 aa).

The Carrier domain maps to 2 to 26 (SDIEQRIKQAVAEQLGMRAEEIKNE).

It belongs to the acyl carrier protein (ACP) family. Post-translationally, 4'-phosphopantetheine is transferred from CoA to a specific serine of apo-ACP by AcpS. This modification is essential for activity because fatty acids are bound in thioester linkage to the sulfhydryl of the prosthetic group.

It localises to the cytoplasm. The protein operates within lipid metabolism; fatty acid biosynthesis. Functionally, carrier of the growing fatty acid chain in fatty acid biosynthesis. This chain is Acyl carrier protein (acpP), found in Acinetobacter calcoaceticus.